A 103-amino-acid polypeptide reads, in one-letter code: N(4)-acetylcytidine amidohydrolase (103 aa).

The region spanning 6–101 is the ASCH domain; it reads ITFFQRFQDD…QTQFYVIEFK (96 aa). Lys-21 (proton acceptor) is an active-site residue. The Nucleophile role is filled by Thr-24. Glu-74 (proton donor) is an active-site residue.

It belongs to the N(4)-acetylcytidine amidohydrolase family.

The enzyme catalyses N(4)-acetylcytidine + H2O = cytidine + acetate + H(+). It carries out the reaction N(4)-acetyl-2'-deoxycytidine + H2O = 2'-deoxycytidine + acetate + H(+). It catalyses the reaction N(4)-acetylcytosine + H2O = cytosine + acetate + H(+). In terms of biological role, catalyzes the hydrolysis of N(4)-acetylcytidine (ac4C). This Escherichia fergusonii (strain ATCC 35469 / DSM 13698 / CCUG 18766 / IAM 14443 / JCM 21226 / LMG 7866 / NBRC 102419 / NCTC 12128 / CDC 0568-73) protein is N(4)-acetylcytidine amidohydrolase (yqfB).